We begin with the raw amino-acid sequence, 159 residues long: Large ribosomal subunit protein uL23m (159 aa).

Belongs to the universal ribosomal protein uL23 family. As to quaternary structure, component of the mitochondrial ribosome large subunit (39S) which comprises a 16S rRNA and about 50 distinct proteins.

The protein resides in the mitochondrion. This is Large ribosomal subunit protein uL23m (mrpl-23) from Caenorhabditis elegans.